The sequence spans 120 residues: MEWKVVDTVISPSTGVSFSCIHSLKNLRLTLWYQADVYMPPGSIIIPFNKGVLINDKLYPVTVYNVTRFNPVLWKSLKENSHCPGNCNPKPEACSYPFECLVSVCPFGLTRNIQIDNKKV.

It belongs to the IraM/RssC family.

It is found in the cytoplasm. Involved in the stabilization of the sigma stress factor RpoS. The polypeptide is Anti-adapter protein IraM (Salmonella choleraesuis (strain SC-B67)).